The following is a 494-amino-acid chain: Paired box protein Pax-2-B (494 aa).

The paired DNA-binding region spans 15–141; that stretch reads RHGGVNQLGG…SSINRIIRTK (127 aa). The interval 18 to 74 is PAI subdomain; that stretch reads GVNQLGGVFVNGRPLPDVVRQRIVELAHQGVRPCDISRQLRVSHGCVSKILGRYYET. The RED subdomain stretch occupies residues 93 to 141; sequence KVVDKIADYKRQNPTMFAWEIRDRLLAEGICDNDTVPSVSSINRIIRTK. Residues 142–221 are disordered; it reads VQQPFHPTPD…GDSQSSVESL (80 aa). Positions 163–175 are enriched in low complexity; sequence VPSTASPPVSSAS.

Expression becomes spatially localized at mid-gastrula stages and is localized to the nervous system (midbrain, hindbrain, spinal cord), sensory organs (optic vesicle and stalk, otic vesicle), visceral arches, developing excretory system (pronephros, pronephric duct, rectal diverticulum, proctodaeum) and thryoid gland. Splicing does not appear to be tissue-specific.

Its subcellular location is the nucleus. Its function is as follows. Probable transcription factor. Involved in kidney development, acting synergistically with lhx1/lim-1 in pronephric morphogenesis during the tailbud stages. This Xenopus laevis (African clawed frog) protein is Paired box protein Pax-2-B (pax2-b).